The following is an 830-amino-acid chain: Serine/threonine-protein kinase atg1 (830 aa).

One can recognise a Protein kinase domain in the interval 14–307; the sequence is YVIRSEIGRG…YDGFFSSIVV (294 aa). Residues 20-28 and lysine 43 contribute to the ATP site; that span reads IGRGSFAIV. The active-site Proton acceptor is the aspartate 157. The residue at position 346 (serine 346) is a Phosphoserine. Over residues 448–468 the composition is skewed to polar residues; it reads TQLSNESLTHEQSINGNSPSP. The segment at 448-480 is disordered; the sequence is TQLSNESLTHEQSINGNSPSPNEGVFQGSFSPE.

Belongs to the protein kinase superfamily. Ser/Thr protein kinase family. APG1/unc-51/ULK1 subfamily. In terms of assembly, homodimer. Component of the atg1 kinase complex composed of at least atg1, atg13, atg17 and atg101. Interacts directly with atg13. Phosphorylated. Dephosphorylated under depletion of nitrogen.

It carries out the reaction L-seryl-[protein] + ATP = O-phospho-L-seryl-[protein] + ADP + H(+). It catalyses the reaction L-threonyl-[protein] + ATP = O-phospho-L-threonyl-[protein] + ADP + H(+). Its function is as follows. Serine/threonine protein kinase involved in the cytoplasm to vacuole transport (Cvt) and found to be essential in autophagy, where it is required for the formation of autophagosomes. Involved in the clearance of protein aggregates which cannot be efficiently cleared by the proteasome. Required for selective autophagic degradation of the nucleus (nucleophagy) as well as for mitophagy which contributes to regulate mitochondrial quantity and quality by eliminating the mitochondria to a basal level to fulfill cellular energy requirements and preventing excess ROS production. Also involved in endoplasmic reticulum-specific autophagic process, in selective removal of ER-associated degradation (ERAD) substrates. Plays a key role in ATG9 and ATG23 cycling through the pre-autophagosomal structure and is necessary to promote ATG18 binding to ATG9 through phosphorylation of ATG9. Catalyzes phosphorylation of ATG4, decreasing the interaction between ATG4 and ATG8 and impairing deconjugation of PE-conjugated forms of ATG8. Autophagy functions to supply nitrogen and is activated when cells cannot access exogenous nitrogen, thus ensuring that they can adapt and subsequently propagate. Finally, atg13 is also required for glycogen storage during stationary phase and has a role in meiosis and sporulation. This is Serine/threonine-protein kinase atg1 from Schizosaccharomyces pombe (strain 972 / ATCC 24843) (Fission yeast).